The primary structure comprises 1724 residues: Sperm flagellar protein 2 (1724 aa).

The Calponin-homology (CH) domain occupies 1-105 (MSEILCQWLN…LLYQLYIALQ (105 aa)). Coiled coils occupy residues 170 to 203 (KAIE…KDLQ) and 255 to 351 (RRLL…REKE). The segment at 545 to 576 (HERQKSGKTPPTQEDDKRDPVVNQEKVSKTQD) is disordered. Basic and acidic residues predominate over residues 558–576 (EDDKRDPVVNQEKVSKTQD). Residues 665 to 691 (NQAKLLEEALTGYKRKFLQLKKKKEQM) are a coiled coil. A disordered region spans residues 828-910 (EEKETEKKAG…PTAPPPPKAG (83 aa)). Positions 853 to 862 (EAEKDKELHQ) are enriched in basic and acidic residues. Positions 995-1021 (EDLWEDEETKAELHQRVNDLRDRLWDI) form a coiled coil. Basic and acidic residues predominate over residues 1177–1194 (RLTEEEKEPPQLDSKEKS). 3 disordered regions span residues 1177 to 1241 (RLTE…EMAE), 1580 to 1618 (VSPI…NANT), and 1704 to 1724 (SEHA…DEKK). Over residues 1210–1221 (PKKKKTDKKGKG) the composition is skewed to basic residues. The tract at residues 1228–1580 (EVSPVTVTPE…MAEKTSISTV (353 aa)) is interaction with IFT20. The span at 1592-1607 (SSAKEDRELKEEKDDQ) shows a compositional bias: basic and acidic residues.

Interacts (via C-terminus) with IFT20. Interacts with DYNC1I2. Highly expressed in testis, where it primarily localizes to late spermatocytes, round spermatids and elongating spermatids (at protein level). Found in Sertoli cells of the testis (at protein level). Expressed at lower levels in epididymis (at protein level). Detected in lung, brain, liver and kidney. Also detected in bone, cartilage, trachea, pituitary gland and eye. Expressed in osteoblasts and chondrocytes.

The protein resides in the cell projection. It is found in the cilium. It localises to the flagellum. Its subcellular location is the cytoplasm. The protein localises to the cytoskeleton. The protein resides in the golgi apparatus. Functionally, required for correct axoneme development in spermatozoa. Important for normal development of the manchette and sperm head morphology. Essential for male fertility. Plays a role in localization of the intraflagellar transport protein IFT20 to the manchette, suggesting function as an adapter for dynein-mediated protein transport during spermatogenesis. Also plays a role in bone growth where it seems to be required for normal osteoblast differentiation. The sequence is that of Sperm flagellar protein 2 (Spef2) from Mus musculus (Mouse).